We begin with the raw amino-acid sequence, 397 residues long: Tryptophan synthase beta chain (397 aa).

Lysine 87 carries the N6-(pyridoxal phosphate)lysine modification.

It belongs to the TrpB family. In terms of assembly, tetramer of two alpha and two beta chains. Pyridoxal 5'-phosphate serves as cofactor.

The catalysed reaction is (1S,2R)-1-C-(indol-3-yl)glycerol 3-phosphate + L-serine = D-glyceraldehyde 3-phosphate + L-tryptophan + H2O. It participates in amino-acid biosynthesis; L-tryptophan biosynthesis; L-tryptophan from chorismate: step 5/5. Functionally, the beta subunit is responsible for the synthesis of L-tryptophan from indole and L-serine. This is Tryptophan synthase beta chain from Shigella boydii serotype 18 (strain CDC 3083-94 / BS512).